We begin with the raw amino-acid sequence, 315 residues long: DNA-directed RNA polymerase subunit alpha (315 aa).

An alpha N-terminal domain (alpha-NTD) region spans residues 1–228; the sequence is MLEIEKPKIE…EHFKLFMTLT (228 aa). The interval 245 to 315 is alpha C-terminal domain (alpha-CTD); sequence KEKVLEMAIE…LGLSLKQNED (71 aa).

The protein belongs to the RNA polymerase alpha chain family. Homodimer. The RNAP catalytic core consists of 2 alpha, 1 beta, 1 beta' and 1 omega subunit. When a sigma factor is associated with the core the holoenzyme is formed, which can initiate transcription.

The enzyme catalyses RNA(n) + a ribonucleoside 5'-triphosphate = RNA(n+1) + diphosphate. Functionally, DNA-dependent RNA polymerase catalyzes the transcription of DNA into RNA using the four ribonucleoside triphosphates as substrates. This Clostridium kluyveri (strain NBRC 12016) protein is DNA-directed RNA polymerase subunit alpha.